We begin with the raw amino-acid sequence, 345 residues long: UbiA prenyltransferase domain-containing protein 1 (345 aa).

8 helical membrane passes run 60-80 (LALRPWSFSASLIPVALGTAI), 90-110 (LLLFVVCAVAVLAVHGAGNLV), 141-161 (VRFGVFLYTLGCLCAACLYFI), 169-189 (LALIYFGGLSSSFLYTGGIGF), 213-233 (AVQVGYLAVTPLLYAVPLALS), 251-273 (QAGIVTLAILVGPMFSYMLYNLL), 285-305 (ATRYTISMALPLLTIPLAFSL), and 324-344 (LNLLVGLFYVFGIVLAPAGSL).

The protein belongs to the UbiA prenyltransferase family.

The protein resides in the endoplasmic reticulum membrane. The protein localises to the golgi apparatus membrane. Its subcellular location is the mitochondrion membrane. The enzyme catalyses menadiol + (2E,6E,10E)-geranylgeranyl diphosphate = menaquinol-4 + diphosphate. The catalysed reaction is all-trans-decaprenyl diphosphate + 4-hydroxybenzoate = 4-hydroxy-3-(all-trans-decaprenyl)benzoate + diphosphate. The protein operates within quinol/quinone metabolism; menaquinone biosynthesis. It participates in cofactor biosynthesis; ubiquinone biosynthesis. In terms of biological role, prenyltransferase that mediates the formation of menaquinone-4 (MK-4) and coenzyme Q10. MK-4 is a vitamin K2 isoform required for endothelial cell development. Mediates the conversion of phylloquinone (PK) into MK-4, probably by cleaving the side chain of phylloquinone (PK) to release 2-methyl-1,4-naphthoquinone (menadione; K3) and then prenylating it with geranylgeranyl pyrophosphate (GGPP) to form MK-4. Also plays a role in cardiovascular development independently of MK-4 biosynthesis, by acting as a coenzyme Q10 biosynthetic enzyme: coenzyme Q10, also named ubiquinone, plays an important antioxidant role in the cardiovascular system. Mediates biosynthesis of coenzyme Q10 in the Golgi membrane, leading to protect cardiovascular tissues from NOS3/eNOS-dependent oxidative stress. The polypeptide is UbiA prenyltransferase domain-containing protein 1 (ubiad1) (Xenopus tropicalis (Western clawed frog)).